The primary structure comprises 190 residues: MISFQIILQQRLRSLRFGKRCKSKRTLKSNSTAVGSSDEDDEIYVPKKPIPSPIDQSKVEEPPVFTKALITHLERLSLVRFSDEQAVLNLKQAVRFANQLKLIDTTGIKPLETLLEDIPCPLREDVPGDPMTKAEVLMNATKVVEDYFVTPPGNIPLEESDKLDLMKIEDDAQKEMSKKTLLKDSVKKTE.

A mitochondrion-targeting transit peptide spans 1–96 (MISFQIILQQ…VLNLKQAVRF (96 aa)). The disordered stretch occupies residues 28 to 57 (KSNSTAVGSSDEDDEIYVPKKPIPSPIDQS).

It belongs to the GatC family. Subunit of the heterotrimeric GatCAB amidotransferase (AdT) complex, composed of A, B and C subunits.

It is found in the mitochondrion. It carries out the reaction L-glutamyl-tRNA(Gln) + L-glutamine + ATP + H2O = L-glutaminyl-tRNA(Gln) + L-glutamate + ADP + phosphate + H(+). Allows the formation of correctly charged Gln-tRNA(Gln) through the transamidation of misacylated Glu-tRNA(Gln) in the mitochondria. The reaction takes place in the presence of glutamine and ATP through an activated gamma-phospho-Glu-tRNA(Gln). The chain is Glutamyl-tRNA(Gln) amidotransferase subunit C, mitochondrial from Loa loa (Eye worm).